We begin with the raw amino-acid sequence, 320 residues long: Cytochrome f (320 aa).

A signal peptide spans 1–35 (MQTRKTLSWIKEEITRSISVSLMIYIITGAYISNA). Tyr-36, Cys-56, Cys-59, and His-60 together coordinate heme. Residues 286–306 (VQGLLFFLASVILAQIFLVLK) traverse the membrane as a helical segment.

This sequence belongs to the cytochrome f family. In terms of assembly, the 4 large subunits of the cytochrome b6-f complex are cytochrome b6, subunit IV (17 kDa polypeptide, petD), cytochrome f and the Rieske protein, while the 4 small subunits are PetG, PetL, PetM and PetN. The complex functions as a dimer. It depends on heme as a cofactor.

Its subcellular location is the plastid. It is found in the chloroplast thylakoid membrane. Functionally, component of the cytochrome b6-f complex, which mediates electron transfer between photosystem II (PSII) and photosystem I (PSI), cyclic electron flow around PSI, and state transitions. The sequence is that of Cytochrome f from Populus trichocarpa (Western balsam poplar).